A 1358-amino-acid chain; its full sequence is MIDDENLNGKEPFLKKENQLLFFLNGEKVLINEPNPELSTLDYIRSIGLTGLKRGCSEGACGSCTFMLSNVVKDDNDTFRIVHRAVNGCLYPLCALDGMAVTTIEGLGNIDKGLHSIQERISENSGSQCGFCTPGIIMALYAFLRSNPNSTQKDIEQNFDGNLCRCTGYRPILDAAKSFANQPSDEQLVELPLPPMATIDDKKDDTQMICPGTGKPCNCKTKTSHIPNKPMELNSEPIFPPFLMEYKKESLKFTGSRVTWYTPTTLEELLKIKKEKTNAKIVVGNTEIGIETRFRSIVYPTIICPTRVEELIQIQKEDNGVRVGASVTLTEMKSYLNGIIKSSENDEIANKKNGTFKAIISQLKWFAGNQVRNAASIGGNLCTASPISDLNPVLLAAGAVLTMVSLDDNGAKVRRQVPINQFFLRYRVVDIKPEEILESVFIPYTRPLEFIQAYKQSRRREDDIAIVSCCFRVLLEPIAESASNTVDSNFKIKDCVLAYGGMNVKAVTCEKTEKQLIGSVWSRELLNDACLNLESDLPLAAGAPGGMIEYRRSLTTGFFFKYFLTVSKQLYQISNGNPLYLVSDKEKSATDAYSRPLSFGEQNYQTQPDKHPITQPIKHQSADKQVTGEALYVDDVKMKSLYAVMVPSLKAHANIKSVDASKALKAPGVKAFFSAKDIPGINDCGPVIHDEEVFVTKTALFHGAPIGCIVAETHIQALEASKLVAIEYEELPAITSIEDAISKQSFFPFTHLLKDGDMEKGWSESDHIIDGEFKVGAQEHFYLEPNGTLVIPGEGKELTVISSTQNPTKTQAIVASVLGIGQNQVVCKLKRLGGGFGGKETRSIFSSCVAAIASYHMKEPVRIILDRDTDMSTTGTRHPFIARYRVGFTKEGLIKALDLELYADAGFSYDISVGVLDRAIFHSENSYKIPNVNILGRLCKTNLPSNTAFRGYGGPQAMIICENWVEKISKTLGMDSYKIRELNFYKEAEVTAYRQSVVNNMMKRVWDELMVKSNYHQRLIAVEKFNKENRYKKRGISIIPTKFGMSFTVKTLNQAGALVHVYTDGTILVTHGGTEMGQGLNTKMIQIAARAFNVPVSDVFISETSTDKVPNTAPTAASVSSDLNGMAVLDACQQILLRMEPIREKNPNVPFKQLCTLCFVERVNLSANGFYATPNVGYMFKDSGVGEGTPFNYFNFGAACSEVEIDTLTGDHTTLRSDVILDVGDSLNPTIDIGQVEGAFVQGMGWSTLEEVVTFPSGYMFTRGPSTYKIPGFNDVPIEFNVSLLGDAPNPKAIHSSKGVGEPPLFLGSSVYFAIRQAITAARLENNLTNWFDLQSPATCERIRTSCLDNFVLQFRKQ.

The 90-residue stretch at 18 to 107 (NQLLFFLNGE…GMAVTTIEGL (90 aa)) folds into the 2Fe-2S ferredoxin-type domain. Residues Cys-56, Cys-61, Cys-64, Cys-89, Cys-129, Cys-132, Cys-164, and Cys-166 each contribute to the [2Fe-2S] cluster site. In terms of domain architecture, FAD-binding PCMH-type spans 253 to 447 (FTGSRVTWYT…ESVFIPYTRP (195 aa)). Residues 281–288 (IVVGNTEI), Phe-366, 376–380 (SIGGN), Asp-389, Leu-437, and Lys-455 each bind FAD. Residues Gln-805 and Phe-836 each coordinate Mo-molybdopterin. Glu-840 and Arg-918 together coordinate substrate. Position 950 (Arg-950) interacts with Mo-molybdopterin. Residues Tyr-952 and Thr-1048 each coordinate substrate. Ala-1117 contacts Mo-molybdopterin. The active-site Proton acceptor is the Glu-1302.

The protein belongs to the xanthine dehydrogenase family. In terms of assembly, homodimer. FAD is required as a cofactor. Requires Mo-molybdopterin as cofactor. [2Fe-2S] cluster serves as cofactor.

The protein localises to the peroxisome. It catalyses the reaction xanthine + NAD(+) + H2O = urate + NADH + H(+). The catalysed reaction is hypoxanthine + NAD(+) + H2O = xanthine + NADH + H(+). Functionally, key enzyme in purine degradation. Catalyzes the oxidation of hypoxanthine to xanthine. Catalyzes the oxidation of xanthine to uric acid. The chain is Xanthine dehydrogenase (xdh) from Dictyostelium discoideum (Social amoeba).